Reading from the N-terminus, the 559-residue chain is Serine/threonine-protein kinase bur1 (559 aa).

Positions 40-341 (YEVLGKLGEG…AIDALNHPYF (302 aa)) constitute a Protein kinase domain. ATP-binding positions include 46–54 (LGEGTFGEV) and Lys-69. The active-site Proton acceptor is Asp-171. Over residues 359-372 (SHEFDRRKFQDRKA) the composition is skewed to basic and acidic residues. The disordered stretch occupies residues 359-559 (SHEFDRRKFQ…GRDRDAYARR (201 aa)). The segment covering 400 to 414 (GRDGYGGGGRNGANG) has biased composition (gly residues). 3 stretches are compositionally biased toward basic and acidic residues: residues 457–467 (DHTDGYRDRPP), 491–534 (YDRD…DSRT), and 543–559 (PVRD…YARR).

Belongs to the protein kinase superfamily. CMGC Ser/Thr protein kinase family. CDC2/CDKX subfamily.

The protein resides in the nucleus. The enzyme catalyses L-seryl-[protein] + ATP = O-phospho-L-seryl-[protein] + ADP + H(+). The catalysed reaction is L-threonyl-[protein] + ATP = O-phospho-L-threonyl-[protein] + ADP + H(+). It carries out the reaction [DNA-directed RNA polymerase] + ATP = phospho-[DNA-directed RNA polymerase] + ADP + H(+). Functionally, serine/threonine-protein kinase involved in transcription regulation. Phosphorylates the mus-8/ubc2 ubiquitin-conjugating enzyme (E2), leading to monoubiquitination of histone H2B and the silencing of telomeric-associated genes. Also required for histone H3 methylation. Necessary for the recovery from pheromone-induced growth arrest in the cell cycle G1 phase. This is Serine/threonine-protein kinase bur1 (stk-1) from Neurospora crassa (strain ATCC 24698 / 74-OR23-1A / CBS 708.71 / DSM 1257 / FGSC 987).